The chain runs to 1012 residues: Tolloid-like protein 2 (1012 aa).

The signal sequence occupies residues 1 to 21; that stretch reads MPLATTLGTLVLLLLLPLPRG. A propeptide spanning residues 22-146 is cleaved from the precursor; it reads AEVTGDHSNV…AKTFSARVRR (125 aa). The tract at residues 83–135 is disordered; that stretch reads KPSIDKPGHDTGGLEETSARWPNDTASNASIQAPRKDGKDATTFLPNPGTSNT. Positions 126–135 are enriched in polar residues; sequence FLPNPGTSNT. In terms of domain architecture, Peptidase M12A spans 146–346; it reads RATTSRTERI…AQARKLYKCP (201 aa). N-linked (GlcNAc...) asparagine glycosylation is present at Asn168. 4 cysteine pairs are disulfide-bonded: Cys189/Cys345, Cys209/Cys231, Cys211/Cys212, and Cys348/Cys374. His239 provides a ligand contact to Zn(2+). Glu240 is an active-site residue. 2 residues coordinate Zn(2+): His243 and His249. CUB domains are found at residues 348–460 and 461–573; these read CGET…YEAM and CGGD…FFKE. 2 N-linked (GlcNAc...) asparagine glycosylation sites follow: Asn358 and Asn389. Cystine bridges form between Cys401–Cys423, Cys461–Cys487, Cys514–Cys536, Cys577–Cys589, Cys585–Cys598, Cys600–Cys613, Cys617–Cys643, Cys670–Cys692, Cys733–Cys744, Cys740–Cys753, Cys755–Cys768, and Cys773–Cys799. An EGF-like 1; calcium-binding domain is found at 573–614; the sequence is EVDECSWPDHGGCEQRCVNTLGSYTCACDPGYELAADKKTCE. The CUB 3 domain maps to 617–729; that stretch reads CGGFITKLNG…RGFRAHFFSD (113 aa). Asn625 carries an N-linked (GlcNAc...) asparagine glycan. In terms of domain architecture, EGF-like 2; calcium-binding spans 729-769; sequence DKDECAKDNGGCQQECVNTFGSYLCRCRNGYRLHENGHDCK. 2 CUB domains span residues 773-885 and 886-1002; these read CAYK…HSTE and CGGR…YTST. The N-linked (GlcNAc...) asparagine glycan is linked to Asn802. Disulfide bonds link Cys826/Cys848, Cys886/Cys916, and Cys943/Cys965. Omega-N-methylarginine occurs at positions 960 and 963.

Zn(2+) serves as cofactor.

It localises to the secreted. Protease which specifically processes pro-lysyl oxidase. Required for the embryonic development. Predominant protease, which in the development, influences dorsal-ventral patterning and skeletogenesis. The polypeptide is Tolloid-like protein 2 (Tll2) (Mus musculus (Mouse)).